The following is a 275-amino-acid chain: Erythroagglutinating phytohemagglutinin (275 aa).

Positions 1–21 are cleaved as a signal peptide; it reads MASSNLLSLALFLVLLTHANS. N-linked (GlcNAc...) (high mannose) asparagine glycosylation occurs at Asn33. Residues Asn81 and Asn101 are each glycosylated (N-linked (GlcNAc...) asparagine).

It belongs to the leguminous lectin family.

In terms of biological role, this insecticidal carbohydrate-binding lectin is toxic for the cowpea weevil. This is Erythroagglutinating phytohemagglutinin (DLEC1) from Phaseolus vulgaris (Kidney bean).